We begin with the raw amino-acid sequence, 178 residues long: MTMYGGHIHLIIGPMFAGKSTELIRLVRRYQIAKHKCLVVKYEKDIRYGNGVCTHDNMSITAVCTPSLDKIDSVAENAEVIGIDEGQFFPNIATFCERMANAGKVLIVAALDGTFQRKPFSNISELIPLAENVTKLNAVCMYCYKNGSFSKRLGDKMEIEVIGGSDKYKSVCRKCYFF.

An ATP-binding site is contributed by 13 to 20 (GPMFAGKS). The Proton acceptor role is filled by E85. Substrate is bound at residue F115. 2 residues coordinate Zn(2+): C140 and C143. A substrate-binding site is contributed by 159–163 (IEVIG). Positions 172 and 175 each coordinate Zn(2+).

This sequence belongs to the thymidine kinase family.

It catalyses the reaction thymidine + ATP = dTMP + ADP + H(+). The protein is Thymidine kinase (TK) of Oryctolagus cuniculus (Rabbit).